Consider the following 336-residue polypeptide: Holliday junction branch migration complex subunit RuvB (336 aa).

Residues 1–181 (MDRIVEIEKF…FGMQFRLEFY (181 aa)) are large ATPase domain (RuvB-L). ATP-binding positions include L20, R21, G62, K65, T66, T67, 128–130 (EDF), R171, Y181, and R218. T66 serves as a coordination point for Mg(2+). Residues 182–252 (KNEELAIILE…RAKEALDSLG (71 aa)) form a small ATPAse domain (RuvB-S) region. A head domain (RuvB-H) region spans residues 255 to 336 (ELGFDAMDLR…KYNKGLFDEK (82 aa)). Residues R309 and R314 each contribute to the DNA site.

Belongs to the RuvB family. In terms of assembly, homohexamer. Forms an RuvA(8)-RuvB(12)-Holliday junction (HJ) complex. HJ DNA is sandwiched between 2 RuvA tetramers; dsDNA enters through RuvA and exits via RuvB. An RuvB hexamer assembles on each DNA strand where it exits the tetramer. Each RuvB hexamer is contacted by two RuvA subunits (via domain III) on 2 adjacent RuvB subunits; this complex drives branch migration. In the full resolvosome a probable DNA-RuvA(4)-RuvB(12)-RuvC(2) complex forms which resolves the HJ.

It localises to the cytoplasm. The enzyme catalyses ATP + H2O = ADP + phosphate + H(+). Its function is as follows. The RuvA-RuvB-RuvC complex processes Holliday junction (HJ) DNA during genetic recombination and DNA repair, while the RuvA-RuvB complex plays an important role in the rescue of blocked DNA replication forks via replication fork reversal (RFR). RuvA specifically binds to HJ cruciform DNA, conferring on it an open structure. The RuvB hexamer acts as an ATP-dependent pump, pulling dsDNA into and through the RuvAB complex. RuvB forms 2 homohexamers on either side of HJ DNA bound by 1 or 2 RuvA tetramers; 4 subunits per hexamer contact DNA at a time. Coordinated motions by a converter formed by DNA-disengaged RuvB subunits stimulates ATP hydrolysis and nucleotide exchange. Immobilization of the converter enables RuvB to convert the ATP-contained energy into a lever motion, pulling 2 nucleotides of DNA out of the RuvA tetramer per ATP hydrolyzed, thus driving DNA branch migration. The RuvB motors rotate together with the DNA substrate, which together with the progressing nucleotide cycle form the mechanistic basis for DNA recombination by continuous HJ branch migration. Branch migration allows RuvC to scan DNA until it finds its consensus sequence, where it cleaves and resolves cruciform DNA. The protein is Holliday junction branch migration complex subunit RuvB of Campylobacter lari (strain RM2100 / D67 / ATCC BAA-1060).